A 95-amino-acid polypeptide reads, in one-letter code: Antitoxin VapB (95 aa).

In terms of biological role, antitoxin component of a type II toxin-antitoxin (TA) system. Partially neutralizes the RNase activity of cognate toxin VapC. The polypeptide is Antitoxin VapB (Rickettsia bellii (strain RML369-C)).